The sequence spans 162 residues: Type IV major fimbrial protein FimA (162 aa).

Positions 1-7 (MKSLQKG) are cleaved as a propeptide — leader sequence. At F8 the chain carries N-methylphenylalanine. The helical transmembrane segment at 8-28 (FTLIELMIVVAIIGILAAFAI) threads the bilayer. A disulfide bridge links C63 with C106.

Belongs to the N-Me-Phe pilin family.

It localises to the fimbrium. The protein resides in the membrane. In terms of biological role, major component of the type IV fimbriae that plays an essential role in twitching motility, natural transformation, and protease secretion. This Dichelobacter nodosus (strain VCS1703A) protein is Type IV major fimbrial protein FimA (fimA).